A 452-amino-acid chain; its full sequence is Isocitrate dehydrogenase [NADP], mitochondrial (452 aa).

A mitochondrion-targeting transit peptide spans 1-39 (MAGYLRAVSSLCRASGSTRTWAPAALNVPSWPEQPRRHY). N6-acetyllysine is present on residues Lys45, Lys48, Lys67, and Lys69. Residues Lys80 and Lys106 each carry the N6-acetyllysine; alternate modification. N6-succinyllysine; alternate is present on residues Lys80 and Lys106. NADP(+)-binding positions include 115–117 (TIT) and Arg122. Residue Thr117 participates in D-threo-isocitrate binding. D-threo-isocitrate-binding positions include 134–140 (SPNGTIR) and Arg149. Lys155 bears the N6-acetyllysine mark. Lys166 bears the N6-acetyllysine; alternate mark. An N6-succinyllysine; alternate modification is found at Lys166. Arg172 is a binding site for D-threo-isocitrate. 2 positions are modified to N6-acetyllysine; alternate: Lys180 and Lys193. N6-succinyllysine; alternate occurs at positions 180 and 193. Residue Lys199 is modified to N6-acetyllysine. Lys256 carries the N6-acetyllysine; alternate modification. Lys256 is modified (N6-succinyllysine; alternate). Residues Lys263, Lys272, Lys275, and Lys280 each carry the N6-acetyllysine modification. Lys282 carries the post-translational modification N6-acetyllysine; alternate. Position 282 is an N6-succinyllysine; alternate (Lys282). A Mn(2+)-binding site is contributed by Asp291. Lys299 is an NADP(+) binding site. A Mn(2+)-binding site is contributed by Asp314. NADP(+) contacts are provided by residues 349-354 (GTVTRH) and Asn367. Lys384 bears the N6-acetyllysine; alternate mark. At Lys384 the chain carries N6-succinyllysine; alternate. 3 positions are modified to N6-acetyllysine: Lys400, Lys413, and Lys442.

It belongs to the isocitrate and isopropylmalate dehydrogenases family. As to quaternary structure, homodimer. Mg(2+) is required as a cofactor. The cofactor is Mn(2+). Post-translationally, acetylation at Lys-413 dramatically reduces catalytic activity. Deacetylated by SIRT3.

Its subcellular location is the mitochondrion. The enzyme catalyses D-threo-isocitrate + NADP(+) = 2-oxoglutarate + CO2 + NADPH. Functionally, plays a role in intermediary metabolism and energy production. It may tightly associate or interact with the pyruvate dehydrogenase complex. This chain is Isocitrate dehydrogenase [NADP], mitochondrial (Idh2), found in Rattus norvegicus (Rat).